The sequence spans 189 residues: Peptidyl-tRNA hydrolase (189 aa).

Tyr-15 is a binding site for tRNA. The Proton acceptor role is filled by His-20. TRNA is bound by residues Phe-66, Asn-68, and Asn-114.

It belongs to the PTH family. As to quaternary structure, monomer.

The protein resides in the cytoplasm. The catalysed reaction is an N-acyl-L-alpha-aminoacyl-tRNA + H2O = an N-acyl-L-amino acid + a tRNA + H(+). Hydrolyzes ribosome-free peptidyl-tRNAs (with 1 or more amino acids incorporated), which drop off the ribosome during protein synthesis, or as a result of ribosome stalling. Functionally, catalyzes the release of premature peptidyl moieties from peptidyl-tRNA molecules trapped in stalled 50S ribosomal subunits, and thus maintains levels of free tRNAs and 50S ribosomes. In Streptococcus equi subsp. zooepidemicus (strain H70), this protein is Peptidyl-tRNA hydrolase.